Consider the following 192-residue polypeptide: Phosphoheptose isomerase (192 aa).

An SIS domain is found at 37–192; sequence LADSFKGGGK…IQLIEKEMVK (156 aa). Residue 52-54 coordinates substrate; sequence NGG. Histidine 61 and glutamate 65 together coordinate Zn(2+). Substrate-binding positions include glutamate 65, 93-94, 119-121, serine 124, and glutamine 172; these read ND and STS. Zn(2+)-binding residues include glutamine 172 and histidine 180.

It belongs to the SIS family. GmhA subfamily. As to quaternary structure, homotetramer. Requires Zn(2+) as cofactor.

The protein resides in the cytoplasm. The catalysed reaction is 2 D-sedoheptulose 7-phosphate = D-glycero-alpha-D-manno-heptose 7-phosphate + D-glycero-beta-D-manno-heptose 7-phosphate. It participates in carbohydrate biosynthesis; D-glycero-D-manno-heptose 7-phosphate biosynthesis; D-glycero-alpha-D-manno-heptose 7-phosphate and D-glycero-beta-D-manno-heptose 7-phosphate from sedoheptulose 7-phosphate: step 1/1. Functionally, catalyzes the isomerization of sedoheptulose 7-phosphate in D-glycero-D-manno-heptose 7-phosphate. This is Phosphoheptose isomerase from Escherichia coli O7:K1 (strain IAI39 / ExPEC).